We begin with the raw amino-acid sequence, 1394 residues long: DNA-directed RNA polymerase subunit beta' (1394 aa).

Zn(2+) contacts are provided by Cys-70, Cys-72, Cys-85, and Cys-88. Mg(2+)-binding residues include Asp-470, Asp-472, and Asp-474. Zn(2+) contacts are provided by Cys-815, Cys-889, Cys-896, and Cys-899.

It belongs to the RNA polymerase beta' chain family. As to quaternary structure, the RNAP catalytic core consists of 2 alpha, 1 beta, 1 beta' and 1 omega subunit. When a sigma factor is associated with the core the holoenzyme is formed, which can initiate transcription. The cofactor is Mg(2+). Requires Zn(2+) as cofactor.

It catalyses the reaction RNA(n) + a ribonucleoside 5'-triphosphate = RNA(n+1) + diphosphate. DNA-dependent RNA polymerase catalyzes the transcription of DNA into RNA using the four ribonucleoside triphosphates as substrates. The polypeptide is DNA-directed RNA polymerase subunit beta' (Anaeromyxobacter sp. (strain K)).